We begin with the raw amino-acid sequence, 113 residues long: Nucleoid-associated protein SAV_4556 (113 aa).

Belongs to the YbaB/EbfC family. Homodimer.

It is found in the cytoplasm. The protein localises to the nucleoid. Binds to DNA and alters its conformation. May be involved in regulation of gene expression, nucleoid organization and DNA protection. The polypeptide is Nucleoid-associated protein SAV_4556 (Streptomyces avermitilis (strain ATCC 31267 / DSM 46492 / JCM 5070 / NBRC 14893 / NCIMB 12804 / NRRL 8165 / MA-4680)).